Consider the following 270-residue polypeptide: Phosphate import ATP-binding protein PstB 2 (270 aa).

The region spanning 25-265 (LQAKDINIYY…PEKKQTEDYI (241 aa)) is the ABC transporter domain. An ATP-binding site is contributed by 57–64 (GPSGCGKS).

It belongs to the ABC transporter superfamily. Phosphate importer (TC 3.A.1.7) family. In terms of assembly, the complex is composed of two ATP-binding proteins (PstB), two transmembrane proteins (PstC and PstA) and a solute-binding protein (PstS).

It localises to the cell membrane. The enzyme catalyses phosphate(out) + ATP + H2O = ADP + 2 phosphate(in) + H(+). Functionally, part of the ABC transporter complex PstSACB involved in phosphate import. Responsible for energy coupling to the transport system. This is Phosphate import ATP-binding protein PstB 2 from Shouchella clausii (strain KSM-K16) (Alkalihalobacillus clausii).